The chain runs to 225 residues: Uracil-DNA glycosylase (225 aa).

Asp-64 (proton acceptor) is an active-site residue.

This sequence belongs to the uracil-DNA glycosylase (UDG) superfamily. UNG family.

It localises to the cytoplasm. It catalyses the reaction Hydrolyzes single-stranded DNA or mismatched double-stranded DNA and polynucleotides, releasing free uracil.. Excises uracil residues from the DNA which can arise as a result of misincorporation of dUMP residues by DNA polymerase or due to deamination of cytosine. The polypeptide is Uracil-DNA glycosylase (Lachnoclostridium phytofermentans (strain ATCC 700394 / DSM 18823 / ISDg) (Clostridium phytofermentans)).